The following is a 200-amino-acid chain: Dephospho-CoA kinase (200 aa).

The region spanning 3-200 (VLGLTGSIGM…LSGKPAAATR (198 aa)) is the DPCK domain. Position 11–16 (11–16 (GMGKTT)) interacts with ATP.

It belongs to the CoaE family.

The protein resides in the cytoplasm. The enzyme catalyses 3'-dephospho-CoA + ATP = ADP + CoA + H(+). It participates in cofactor biosynthesis; coenzyme A biosynthesis; CoA from (R)-pantothenate: step 5/5. Functionally, catalyzes the phosphorylation of the 3'-hydroxyl group of dephosphocoenzyme A to form coenzyme A. This Brucella melitensis biotype 1 (strain ATCC 23456 / CCUG 17765 / NCTC 10094 / 16M) protein is Dephospho-CoA kinase.